An 82-amino-acid chain; its full sequence is Small ribosomal subunit protein bS16 (82 aa).

Belongs to the bacterial ribosomal protein bS16 family.

This Saccharophagus degradans (strain 2-40 / ATCC 43961 / DSM 17024) protein is Small ribosomal subunit protein bS16.